A 215-amino-acid polypeptide reads, in one-letter code: UPF0502 protein Ping_1905 (215 aa).

The protein belongs to the UPF0502 family.

In Psychromonas ingrahamii (strain DSM 17664 / CCUG 51855 / 37), this protein is UPF0502 protein Ping_1905.